Reading from the N-terminus, the 119-residue chain is Gibberellin-regulated protein 9 (119 aa).

An N-terminal signal peptide occupies residues M1–A24.

It belongs to the GASA family. Six disulfide bonds may be present.

Its subcellular location is the secreted. In terms of biological role, gibberellin-regulated protein that may function in hormonal controlled steps of development such as seed germination, flowering and seed maturation. In Arabidopsis thaliana (Mouse-ear cress), this protein is Gibberellin-regulated protein 9 (GASA9).